The chain runs to 557 residues: Elongator complex protein 3 (557 aa).

The 291-residue stretch at 91 to 381 (RTASGIAVVA…YRVQRDIPMP (291 aa)) folds into the Radical SAM core domain. [4Fe-4S] cluster-binding residues include Cys-108, Cys-118, and Cys-121. Residue Lys-173 coordinates acetyl-CoA. Residues 405 to 557 (TTCRDVRTRE…LDGPYMSKRI (153 aa)) enclose the N-acetyltransferase domain. A Glycyl lysine isopeptide (Lys-Gly) (interchain with G-Cter in ubiquitin) cross-link involves residue Lys-453. Residues 485–488 (ELHV), 508–510 (FGT), and Tyr-541 each bind acetyl-CoA.

It belongs to the ELP3 family. As to quaternary structure, component of the elongator complex which consists of ELP1/IKI3, ELP2, ELP3, ELP4, ELP5/IKI1 and ELP6. The elongator complex is composed of two copies of the Elp123 subcomplex (composed of ELP1/IKI3, ELP2 and ELP3) and two copies of the Elp456 subcomplex (composed of ELP4, ELP5/IKI1 and ELP6). The Elp123 subcomplex forms a two-lobed scaffold, which binds the Elp456 subcomplex asymmetrically. In each lobe, ELP2 is tightly sandwiched between ELP1/IKI3 and ELP3. The Elp123 subcomplex binds tRNA through ELP1/IKI3 and ELP3 and can bind 2 tRNAs simultaneously. tRNA-binding induces conformational rearrangements which precisely position the targeted anticodon base in the active site. ELP3 interacts with KTI11/DPH3. ELP3 interacts with KTI12. The Elp456 subcomplex binds tRNA and has ATPase activity. Requires [4Fe-4S] cluster as cofactor.

The protein localises to the cytoplasm. It localises to the nucleus. The catalysed reaction is uridine(34) in tRNA + acetyl-CoA + S-adenosyl-L-methionine + H2O = 5-(carboxymethyl)uridine(34) in tRNA + 5'-deoxyadenosine + L-methionine + CoA + 2 H(+). It participates in tRNA modification; 5-methoxycarbonylmethyl-2-thiouridine-tRNA biosynthesis. Catalytic tRNA acetyltransferase subunit of the elongator complex which is required for multiple tRNA modifications, including mcm5U (5-methoxycarbonylmethyl uridine), mcm5s2U (5-methoxycarbonylmethyl-2-thiouridine), and ncm5U (5-carbamoylmethyl uridine). In the elongator complex, acts as a tRNA uridine(34) acetyltransferase, which mediates formation of carboxymethyluridine in the wobble base at position 34 in tRNAs. The complex functions as a gamma-toxin target (TOT); disruption of the complex confers resistance to Kluyveromyces lactis toxin zymocin (pGKL1 killer toxin). May also be involved in sensitivity to Pichia inositovora toxin. Independently, ELP3 may be involved in polarized exocytosis. The polypeptide is Elongator complex protein 3 (Saccharomyces cerevisiae (strain ATCC 204508 / S288c) (Baker's yeast)).